Here is an 884-residue protein sequence, read N- to C-terminus: Lon protease homolog 2, peroxisomal (884 aa).

The 244-residue stretch at 12 to 255 folds into the Lon N-terminal domain; it reads LAILPFRNKV…KATELVDRHL (244 aa). The segment at 67–101 is disordered; that stretch reads SLLSPGVGSDSGEGGSKAPGGSAGESTKQDTKNGK. Residues 75–89 show a composition bias toward gly residues; it reads SDSGEGGSKAPGGSA. 408–415 lines the ATP pocket; the sequence is GPPGVGKT. The Lon proteolytic domain occupies 689–874; that stretch reads VASPGVSVGL…EEVLDHAFEG (186 aa). Residues Ser-780 and Lys-823 contribute to the active site. Residues 882-884 carry the Microbody targeting signal motif; the sequence is SKL.

This sequence belongs to the peptidase S16 family.

It is found in the peroxisome matrix. The catalysed reaction is Hydrolysis of proteins in presence of ATP.. Functionally, ATP-dependent serine protease that mediates the selective degradation of misfolded and unassembled polypeptides in the peroxisomal matrix. Necessary for type 2 peroxisome targeting signal (PTS2)-containing protein processing and facilitates peroxisome matrix protein import. In Oryza sativa subsp. japonica (Rice), this protein is Lon protease homolog 2, peroxisomal.